Consider the following 228-residue polypeptide: Aquaporin Z (228 aa).

2 helical membrane passes run 1–21 (MLNKLSAEFFGTFWLVFGGCG) and 23–43 (AILAAAFPELGIGFLGVALAF). The short motif at 63-65 (NPA) is the NPA 1 element. The next 3 membrane-spanning stretches (helical) occupy residues 82 to 102 (IPYWVAQVLGAIAAAAILYVI), 129 to 149 (MMAGLLIEIILTAFFIIIILG), and 154 to 174 (LAPAGFAPIAIGFGLTLIHLV). Residues 184-186 (NPA) carry the NPA 2 motif. The helical transmembrane segment at 205-225 (LFWVAPLVGAVIGAIIWKGLL) threads the bilayer.

This sequence belongs to the MIP/aquaporin (TC 1.A.8) family. As to quaternary structure, homotetramer.

The protein localises to the cell inner membrane. The enzyme catalyses H2O(in) = H2O(out). Functionally, channel that permits osmotically driven movement of water in both directions. It is involved in the osmoregulation and in the maintenance of cell turgor during volume expansion in rapidly growing cells. It mediates rapid entry or exit of water in response to abrupt changes in osmolarity. The protein is Aquaporin Z of Brucella abortus biovar 1 (strain 9-941).